The primary structure comprises 277 residues: Mitochondrial outer membrane protein porin 5 (277 aa).

The protein belongs to the eukaryotic mitochondrial porin (TC 1.B.8.1) family.

It is found in the mitochondrion outer membrane. Forms a channel through the mitochondrial outer membrane that allows diffusion of small hydrophilic molecules. The channel adopts an open conformation at low or zero membrane potential and a closed conformation at potentials above 30-40 mV. The open state has a weak anion selectivity whereas the closed state is cation-selective. In Oryza sativa subsp. japonica (Rice), this protein is Mitochondrial outer membrane protein porin 5 (VDAC5).